We begin with the raw amino-acid sequence, 104 residues long: L-rhamnose mutarotase (104 aa).

A substrate-binding site is contributed by tyrosine 18. The Proton donor role is filled by histidine 22. Residues tyrosine 41 and 76–77 (WW) contribute to the substrate site.

The protein belongs to the rhamnose mutarotase family. As to quaternary structure, homodimer.

It localises to the cytoplasm. The catalysed reaction is alpha-L-rhamnose = beta-L-rhamnose. Its pathway is carbohydrate metabolism; L-rhamnose metabolism. Its function is as follows. Involved in the anomeric conversion of L-rhamnose. This Burkholderia orbicola (strain MC0-3) protein is L-rhamnose mutarotase.